A 523-amino-acid chain; its full sequence is L-tyrosine:2-oxoglutarate aminotransferase ucdG (523 aa).

Belongs to the class-I pyridoxal-phosphate-dependent aminotransferase family. In terms of assembly, homodimer. The cofactor is pyridoxal 5'-phosphate.

It is found in the cytoplasm. The enzyme catalyses L-tyrosine + 2-oxoglutarate = 3-(4-hydroxyphenyl)pyruvate + L-glutamate. It participates in secondary metabolite biosynthesis. Its function is as follows. Nonribosomal peptide synthetase that mediates the biosynthesis of usterphenyllins and uscandidusins, p-terphenyl derivatives. Within the pathway, ucdG is probably involved in the conversion of L-tyrosine into 4-hydroxyphenylpyruvate (HPPA) as a precursor for the usterphenyllin and uscandidusin biosynthesis. UcdE further prenylates position C-14 of ring C of usterphenyllin B to form usterphenyllin A. The pathway begin with the biosynthesis of 4-hydroxyphenylpyruvate (HPPA) from L-tyrosine, possibly by the aminotransferase ucdG. The nonribosomal peptide synthetase ucdA then condenses two HPPA units to produce atromentin. The key step in this pathway is the reduction and dehydration of atromentin to form a terphenyl triol intermediate, performed by the NAD-dependent dehydrogenase ucdB. Further O-methylation by the methyltransferase ucdC forms terphenyllin carrying two methoxy moieties at C-9 and C-12, and subsequent dihydroxylation at C-3 of ring A and C-15 of ring C by the flavin-dependent oxygenase ucdD leads to 3,15-dihydroxyterphenyllin. Prenylation by ucdE at position C-5 of ring A forms usterphenyllin B, and is followed by a second prenylation at position C-14 of ring C to form usterphenyllin A. The following furan ring formation that leads to uscandidusins A and B was proven to be an unexpected spontaneous non-enzymatic reaction. The protein is L-tyrosine:2-oxoglutarate aminotransferase ucdG of Aspergillus ustus.